The sequence spans 317 residues: Beta-ketoacyl-[acyl-carrier-protein] synthase III (317 aa).

Catalysis depends on residues C112 and H244. Residues 245 to 249 form an ACP-binding region; the sequence is QANIR. N274 is an active-site residue.

It belongs to the thiolase-like superfamily. FabH family. As to quaternary structure, homodimer.

Its subcellular location is the cytoplasm. It carries out the reaction malonyl-[ACP] + acetyl-CoA + H(+) = 3-oxobutanoyl-[ACP] + CO2 + CoA. Its pathway is lipid metabolism; fatty acid biosynthesis. In terms of biological role, catalyzes the condensation reaction of fatty acid synthesis by the addition to an acyl acceptor of two carbons from malonyl-ACP. Catalyzes the first condensation reaction which initiates fatty acid synthesis and may therefore play a role in governing the total rate of fatty acid production. Possesses both acetoacetyl-ACP synthase and acetyl transacylase activities. Its substrate specificity determines the biosynthesis of branched-chain and/or straight-chain of fatty acids. The protein is Beta-ketoacyl-[acyl-carrier-protein] synthase III of Rickettsia akari (strain Hartford).